Here is a 335-residue protein sequence, read N- to C-terminus: 2-acylglycerol O-acyltransferase 1 (335 aa).

Helical transmembrane passes span 24 to 44 (WVFS…CLVL) and 47 to 67 (VWLL…TPQA). 2 N-linked (GlcNAc...) asparagine glycosylation sites follow: N125 and N180.

This sequence belongs to the diacylglycerol acyltransferase family.

The protein localises to the endoplasmic reticulum membrane. It catalyses the reaction a 2-acylglycerol + an acyl-CoA = a 1,2-diacylglycerol + CoA. It carries out the reaction a 2-acylglycerol + an acyl-CoA = a 1,2-diacyl-sn-glycerol + CoA. The enzyme catalyses a 2-acylglycerol + an acyl-CoA = a 2,3-diacyl-sn-glycerol + CoA. The catalysed reaction is a 1-acylglycerol + an acyl-CoA = a 1,2-diacylglycerol + CoA. It catalyses the reaction a 1-acylglycerol + an acyl-CoA = a 1,3-diacylglycerol + CoA. It carries out the reaction a 1-acyl-sn-glycerol + an acyl-CoA = a 1,3-diacyl-sn-glycerol + CoA. The enzyme catalyses a 3-acyl-sn-glycerol + an acyl-CoA = a 1,3-diacyl-sn-glycerol + CoA. The protein operates within glycerolipid metabolism; triacylglycerol biosynthesis. Involved in glycerolipid synthesis and lipid metabolism. Catalyzes the formation of diacylglycerol, the precursor of triacylglycerol, by transferring the acyl chain of a fatty acyl-CoA to a monoacylglycerol, mainly at the sn-1 or sn-3 positions. It uses both sn-2-monoacylglycerol (2-acylglycerol) and sn-1-monoacylglycerol (1-acyl-sn-glycerol) equally well as substrates, and uses sn-3-monoacylglycerol (3-acyl-sn-glycerol) with lower efficiency. The protein is 2-acylglycerol O-acyltransferase 1 (mogat1) of Xenopus laevis (African clawed frog).